Reading from the N-terminus, the 393-residue chain is Prokineticin receptor 1 (393 aa).

At 1-63 (MEITMGVMDE…NSRTFFAAKI (63 aa)) the chain is on the extracellular side. 3 N-linked (GlcNAc...) asparagine glycosylation sites follow: asparagine 11, asparagine 14, and asparagine 36. A helical transmembrane segment spans residues 64-84 (VIGMALVGIMLVCGIGNFIFI). The Cytoplasmic segment spans residues 85–98 (AALARYKKLRNLTN). The helical transmembrane segment at 99–119 (LLIANLAISDFLVAIVCCPFE) threads the bilayer. Over 120 to 145 (MDYYVVRQLSWEHGHVLCASVNYLRT) the chain is Extracellular. Cysteine 137 and cysteine 217 are oxidised to a cystine. A helical transmembrane segment spans residues 146-166 (VSLYVSTNALLAIAIDRYLAI). The Cytoplasmic portion of the chain corresponds to 167-179 (VHPLRPRMKYQTA). A helical membrane pass occupies residues 180 to 200 (TGLIALVWVVSILVAIPSAYF). Topologically, residues 201-232 (TTETVLVIVKSQEKIFCGQIWPVDQQIYYKSY) are extracellular. A helical membrane pass occupies residues 233 to 253 (FLFIFGIEFVGPVVTMTLCYA). Topologically, residues 254–282 (RISRELWFKAVPGFQTEQIRKRLRCRRKT) are cytoplasmic. The helical transmembrane segment at 283 to 303 (VLVLMCILTAYVLCWAPFYGF) threads the bilayer. The Extracellular segment spans residues 304–322 (AIVRDFFPTVFVKEKHYLT). The chain crosses the membrane as a helical span at residues 323–343 (AFYVVECIAMSNSMINTVCFV). The Cytoplasmic portion of the chain corresponds to 344-393 (TVKNNTIKYFKKIMLLHWKASYNGSKSSGDLDLKTTGVPATEEVDCIGLK).

This sequence belongs to the G-protein coupled receptor 1 family.

It is found in the cell membrane. Its function is as follows. Receptor for prokineticin 1. Exclusively coupled to the G(q) subclass of heteromeric G proteins. Activation leads to mobilization of calcium, stimulation of phosphoinositide turnover and activation of p44/p42 mitogen-activated protein kinase. May play a role during early pregnancy. The protein is Prokineticin receptor 1 (PROKR1) of Bos taurus (Bovine).